The following is a 125-amino-acid chain: Protein sigma-1-small (125 aa).

Belongs to the orthoreovirus sigma-1s protein family.

This is Protein sigma-1-small (S1) from Mammalia (T2J).